The primary structure comprises 315 residues: Methionyl-tRNA formyltransferase (315 aa).

Position 113–116 (113–116 (SLLP)) interacts with (6S)-5,6,7,8-tetrahydrofolate.

The protein belongs to the Fmt family.

It carries out the reaction L-methionyl-tRNA(fMet) + (6R)-10-formyltetrahydrofolate = N-formyl-L-methionyl-tRNA(fMet) + (6S)-5,6,7,8-tetrahydrofolate + H(+). Its function is as follows. Attaches a formyl group to the free amino group of methionyl-tRNA(fMet). The formyl group appears to play a dual role in the initiator identity of N-formylmethionyl-tRNA by promoting its recognition by IF2 and preventing the misappropriation of this tRNA by the elongation apparatus. The protein is Methionyl-tRNA formyltransferase of Yersinia pseudotuberculosis serotype O:1b (strain IP 31758).